The following is an 804-amino-acid chain: Lon protease (804 aa).

Positions 1–23 are disordered; it reads MSADSENETSESSPAGEATASTS. Residues 30–224 enclose the Lon N-terminal domain; the sequence is LILLPVRNAV…KVLDAVAGRI (195 aa). 376–383 is a binding site for ATP; that stretch reads GPPGVGKT. The 182-residue stretch at 612 to 793 folds into the Lon proteolytic domain; sequence TSLPGVVTGL…DDAVREIIED (182 aa). Catalysis depends on residues serine 699 and lysine 742.

It belongs to the peptidase S16 family. As to quaternary structure, homohexamer. Organized in a ring with a central cavity.

The protein localises to the cytoplasm. The catalysed reaction is Hydrolysis of proteins in presence of ATP.. Its function is as follows. ATP-dependent serine protease that mediates the selective degradation of mutant and abnormal proteins as well as certain short-lived regulatory proteins. Required for cellular homeostasis and for survival from DNA damage and developmental changes induced by stress. Degrades polypeptides processively to yield small peptide fragments that are 5 to 10 amino acids long. Binds to DNA in a double-stranded, site-specific manner. This Paraburkholderia phytofirmans (strain DSM 17436 / LMG 22146 / PsJN) (Burkholderia phytofirmans) protein is Lon protease.